Here is a 375-residue protein sequence, read N- to C-terminus: 4-hydroxy-3-methylbut-2-en-1-yl diphosphate synthase (flavodoxin) (375 aa).

[4Fe-4S] cluster-binding residues include Cys275, Cys278, Cys310, and Glu317.

It belongs to the IspG family. The cofactor is [4Fe-4S] cluster.

The enzyme catalyses (2E)-4-hydroxy-3-methylbut-2-enyl diphosphate + oxidized [flavodoxin] + H2O + 2 H(+) = 2-C-methyl-D-erythritol 2,4-cyclic diphosphate + reduced [flavodoxin]. The protein operates within isoprenoid biosynthesis; isopentenyl diphosphate biosynthesis via DXP pathway; isopentenyl diphosphate from 1-deoxy-D-xylulose 5-phosphate: step 5/6. Converts 2C-methyl-D-erythritol 2,4-cyclodiphosphate (ME-2,4cPP) into 1-hydroxy-2-methyl-2-(E)-butenyl 4-diphosphate. The protein is 4-hydroxy-3-methylbut-2-en-1-yl diphosphate synthase (flavodoxin) of Ruegeria pomeroyi (strain ATCC 700808 / DSM 15171 / DSS-3) (Silicibacter pomeroyi).